A 471-amino-acid polypeptide reads, in one-letter code: Protein naked cuticle homolog 1 (471 aa).

Disordered stretches follow at residues Met1–Phe23 and Gln41–Asp82. A lipid anchor (N-myristoyl glycine) is attached at Gly2. Positions Gly62–Leu75 are enriched in basic and acidic residues. Residues Gln125–Asp190 form an interaction with DVL1, DVL2 and DVL3 region. The region spanning Glu131–Val166 is the EF-hand domain. Ca(2+) contacts are provided by Asp144, Asp146, Asn148, Lys150, and Asp155. Disordered stretches follow at residues Gly273–Asp314, Gly337–Ala382, and Gln448–Pro471. The span at His453–Pro471 shows a compositional bias: basic residues.

Belongs to the NKD family. Interacts with DVL1, DVL2, DVL3 and PPP2R3A. In terms of tissue distribution, highly expressed in lung. Also expressed in brain, heart, kidney, liver, skin, stomach and testis. Within the testis expression is found in the seminiferous epithelium and round and elongating spermatids.

It localises to the cell membrane. The protein localises to the cytoplasm. Its function is as follows. Cell autonomous antagonist of the canonical Wnt signaling pathway. May activate a second Wnt signaling pathway that controls planar cell polarity. Required for spermatogenesis. This Mus musculus (Mouse) protein is Protein naked cuticle homolog 1 (Nkd1).